The chain runs to 308 residues: Rhamnose-binding lectin (308 aa).

A signal peptide spans 1–23 (MMLILKLSLLSLLIATPGLLVSG). SUEL-type lectin domains follow at residues 27 to 115 (ITCY…SFDC), 123 to 213 (ICEH…YICT), and 218 to 308 (VCEG…YACV). The N-linked (GlcNAc...) asparagine glycan is linked to Asn110.

In terms of assembly, homotrimer. As to expression, expressed in eggs, but not in liver.

The protein resides in the secreted. Lectin that binds L-rhamnose. Also binds monosaccharides possessing steric similarity to the hydroxyl group orientation at C2 and C4 of the pyranose ring structure of L-rhamnose, such as L-mannose and L-lyxose. This Silurus asotus (Amur catfish) protein is Rhamnose-binding lectin.